Consider the following 353-residue polypeptide: Rhodopsin (353 aa).

At 1 to 36 (MNGTEGPYFYIPMVNTTGIVRSPYEYPQYYLVNPAA) the chain is on the extracellular side. Residues Asn2 and Asn15 are each glycosylated (N-linked (GlcNAc...) asparagine). Residues 37 to 61 (YAALGAYMFLLILVGFPINFLTLYV) form a helical membrane-spanning segment. Over 62–73 (TIEHKKLRTPLN) the chain is Cytoplasmic. The helical transmembrane segment at 74–96 (YILLNLAVANLFMVFGGFTTTMY) threads the bilayer. The Extracellular segment spans residues 97–110 (TSMHGYFVLGRLGC). An intrachain disulfide couples Cys110 to Cys187. The chain crosses the membrane as a helical span at residues 111–133 (NLEGFFATLGGEIALWSLVVLAI). The short motif at 134 to 136 (ERW) is the 'Ionic lock' involved in activated form stabilization element. Residues 134–152 (ERWMVVCKPISNFRFGEDH) are Cytoplasmic-facing. The helical transmembrane segment at 153 to 173 (AIMGLAFTWVMAAACAVPPLV) threads the bilayer. The Extracellular segment spans residues 174–202 (GWSRYIPEGMQCSCGIDYYTRAEGFNNES). Asn200 carries an N-linked (GlcNAc...) asparagine glycan. The helical transmembrane segment at 203 to 224 (FVIYMFVCHFLIPLVVVFFCYG) threads the bilayer. Over 225 to 252 (RLLCAVKEAAAAQQESETTQRAEREVSR) the chain is Cytoplasmic. The helical transmembrane segment at 253–274 (MVVIMVVAFLICWCPYAGVAWY) threads the bilayer. The Extracellular segment spans residues 275–286 (IFTHQGSEFGPL). A helical transmembrane segment spans residues 287–308 (FMTFPAFFAKSSSIYNPMIYIC). N6-(retinylidene)lysine is present on Lys296. Residues 309-353 (MNKQFRHCMITTLCCGKNPFEEEEGASTTSKTEASSVSSSSVSPA) are Cytoplasmic-facing. S-palmitoyl cysteine attachment occurs at residues Cys322 and Cys323. Residues 330–353 (EEEGASTTSKTEASSVSSSSVSPA) form a disordered region. Positions 334–353 (ASTTSKTEASSVSSSSVSPA) are enriched in low complexity.

This sequence belongs to the G-protein coupled receptor 1 family. Opsin subfamily. In terms of processing, phosphorylated on some or all of the serine and threonine residues present in the C-terminal region. Contains one covalently linked retinal chromophore.

It localises to the membrane. Its subcellular location is the cell projection. It is found in the cilium. The protein resides in the photoreceptor outer segment. Its function is as follows. Photoreceptor required for image-forming vision at low light intensity. While most salt water fish species use retinal as chromophore, most freshwater fish use 3-dehydroretinal, or a mixture of retinal and 3-dehydroretinal. Light-induced isomerization of 11-cis to all-trans retinal triggers a conformational change that activates signaling via G-proteins. Subsequent receptor phosphorylation mediates displacement of the bound G-protein alpha subunit by arrestin and terminates signaling. This chain is Rhodopsin (rho), found in Chelon saliens (Leaping mullet).